The following is a 432-amino-acid chain: Gamma-glutamyl phosphate reductase (432 aa).

Belongs to the gamma-glutamyl phosphate reductase family.

It localises to the cytoplasm. The enzyme catalyses L-glutamate 5-semialdehyde + phosphate + NADP(+) = L-glutamyl 5-phosphate + NADPH + H(+). It functions in the pathway amino-acid biosynthesis; L-proline biosynthesis; L-glutamate 5-semialdehyde from L-glutamate: step 2/2. Catalyzes the NADPH-dependent reduction of L-glutamate 5-phosphate into L-glutamate 5-semialdehyde and phosphate. The product spontaneously undergoes cyclization to form 1-pyrroline-5-carboxylate. The polypeptide is Gamma-glutamyl phosphate reductase (Methylorubrum populi (strain ATCC BAA-705 / NCIMB 13946 / BJ001) (Methylobacterium populi)).